Reading from the N-terminus, the 662-residue chain is Interferon-induced GTP-binding protein Mx1 (662 aa).

Position 1 is an N-acetylmethionine; in Interferon-induced GTP-binding protein Mx1; alternate (Met1). The Dynamin-type G domain maps to 67 to 340 (DLALPAIAVI…LITHICKSLP (274 aa)). The G1 motif stretch occupies residues 77–84 (GDQSSGKS). 77–84 (GDQSSGKS) is a binding site for GTP. Residues 102–104 (VTR) form a G2 motif region. The G3 motif stretch occupies residues 178 to 181 (DLPG). GTP is bound by residues 178-182 (DLPGI) and 247-250 (TKPD). The G4 motif stretch occupies residues 247–250 (TKPD). Positions 279 to 282 (KCRG) are G5 motif. The bundle signaling element (BSE) stretch occupies residues 341–366 (LLENQIKETHQRITEELQKYGVDIPE). A middle domain region spans residues 366–533 (EDENEKMFFL…HFQMEQIVYC (168 aa)). Residues 367-632 (DENEKMFFLI…KDTYSWLLKE (266 aa)) are stalk. The segment at 554-557 (KKKK) is critical for lipid-binding. The GED domain occupies 574-662 (MEEIFQHLMA…ARRRLAQFPG (89 aa)).

The protein belongs to the TRAFAC class dynamin-like GTPase superfamily. Dynamin/Fzo/YdjA family. As to quaternary structure, homotetramer. Oligomerizes into multimeric filamentous or ring-like structures by virtue of its stalk domain. Oligomerization is critical for GTPase activity, protein stability, and recognition of viral target structures. Interacts with TRPC1, TRPC3, TRPC4, TRPC5, TRPC6 and TRPC7. Interacts with HSPA5. Interacts with DDX39A and DDX39B. Interacts with TUBB/TUBB5. The GTP-bound form interacts (via C-terminus) with THOV P5 protein. The GTP-bound form interacts with LACV protein N. Interacts with CCHFV protein N. In terms of processing, ISGylated.

Its subcellular location is the cytoplasm. The protein localises to the endoplasmic reticulum membrane. It localises to the perinuclear region. It is found in the nucleus. Functionally, interferon-induced dynamin-like GTPase with antiviral activity against a wide range of RNA viruses and some DNA viruses. Its target viruses include negative-stranded RNA viruses and HBV through binding and inactivation of their ribonucleocapsid. May also antagonize reoviridae and asfarviridae replication. Inhibits thogoto virus (THOV) replication by preventing the nuclear import of viral nucleocapsids. Inhibits La Crosse virus (LACV) replication by sequestering viral nucleoprotein in perinuclear complexes, preventing genome amplification, budding, and egress. Inhibits influenza A virus (IAV) replication by decreasing or delaying NP synthesis and by blocking endocytic traffic of incoming virus particles. Enhances ER stress-mediated cell death after influenza virus infection. May regulate the calcium channel activity of TRPCs. The polypeptide is Interferon-induced GTP-binding protein Mx1 (MX1) (Homo sapiens (Human)).